The following is a 273-amino-acid chain: 1,4-dihydroxy-2-naphthoyl-CoA synthase (273 aa).

Residues Arg-34, 73–77, Tyr-85, 117–121, Thr-143, Ser-149, Tyr-246, and Lys-261 each bind substrate; these read SGGDQ and YAVGG. 142–144 serves as a coordination point for hydrogencarbonate; sequence QTG. The segment covering 254–265 has biased composition (basic and acidic residues); the sequence is GRDAFKEKRDPD. Positions 254–273 are disordered; that stretch reads GRDAFKEKRDPDFDQFPKFP.

Belongs to the enoyl-CoA hydratase/isomerase family. MenB subfamily. The cofactor is hydrogencarbonate.

The catalysed reaction is 2-succinylbenzoyl-CoA + H(+) = 1,4-dihydroxy-2-naphthoyl-CoA + H2O. The protein operates within quinol/quinone metabolism; 1,4-dihydroxy-2-naphthoate biosynthesis; 1,4-dihydroxy-2-naphthoate from chorismate: step 6/7. Its pathway is quinol/quinone metabolism; menaquinone biosynthesis. In terms of biological role, converts o-succinylbenzoyl-CoA (OSB-CoA) to 1,4-dihydroxy-2-naphthoyl-CoA (DHNA-CoA). The chain is 1,4-dihydroxy-2-naphthoyl-CoA synthase from Staphylococcus aureus (strain Mu50 / ATCC 700699).